We begin with the raw amino-acid sequence, 89 residues long: Small ribosomal subunit protein uS15 (89 aa).

It belongs to the universal ribosomal protein uS15 family. As to quaternary structure, part of the 30S ribosomal subunit. Forms a bridge to the 50S subunit in the 70S ribosome, contacting the 23S rRNA.

Functionally, one of the primary rRNA binding proteins, it binds directly to 16S rRNA where it helps nucleate assembly of the platform of the 30S subunit by binding and bridging several RNA helices of the 16S rRNA. Its function is as follows. Forms an intersubunit bridge (bridge B4) with the 23S rRNA of the 50S subunit in the ribosome. In Neisseria gonorrhoeae (strain ATCC 700825 / FA 1090), this protein is Small ribosomal subunit protein uS15.